Here is a 319-residue protein sequence, read N- to C-terminus: tRNA U34 carboxymethyltransferase (319 aa).

Carboxy-S-adenosyl-L-methionine contacts are provided by residues Lys88, Trp102, Lys107, Gly126, 176 to 177, Met192, Tyr196, and Arg311; that span reads LE.

This sequence belongs to the class I-like SAM-binding methyltransferase superfamily. CmoB family. As to quaternary structure, homotetramer.

The catalysed reaction is carboxy-S-adenosyl-L-methionine + 5-hydroxyuridine(34) in tRNA = 5-carboxymethoxyuridine(34) in tRNA + S-adenosyl-L-homocysteine + H(+). Functionally, catalyzes carboxymethyl transfer from carboxy-S-adenosyl-L-methionine (Cx-SAM) to 5-hydroxyuridine (ho5U) to form 5-carboxymethoxyuridine (cmo5U) at position 34 in tRNAs. This Pseudomonas savastanoi pv. phaseolicola (strain 1448A / Race 6) (Pseudomonas syringae pv. phaseolicola (strain 1448A / Race 6)) protein is tRNA U34 carboxymethyltransferase.